The primary structure comprises 185 residues: dCTP deaminase (185 aa).

DCTP contacts are provided by residues 107-112, 131-133, Gln152, Tyr166, and Gln176; these read KSTYAR and TLE. The active-site Proton donor/acceptor is the Glu133.

The protein belongs to the dCTP deaminase family. Homotrimer.

The enzyme catalyses dCTP + H2O + H(+) = dUTP + NH4(+). Its pathway is pyrimidine metabolism; dUMP biosynthesis; dUMP from dCTP (dUTP route): step 1/2. Functionally, catalyzes the deamination of dCTP to dUTP. The chain is dCTP deaminase from Anaplasma phagocytophilum (strain HZ).